The following is a 153-amino-acid chain: Protein ElaA (153 aa).

The N-acetyltransferase domain maps to 7–151; the sequence is LHHSELSVSQ…PHIGMAREVI (145 aa).

The protein belongs to the UPF0039 (ElaA) family.

The sequence is that of Protein ElaA (elaA) from Escherichia coli (strain K12).